Reading from the N-terminus, the 309-residue chain is NAD kinase (309 aa).

The active-site Proton acceptor is the aspartate 89. NAD(+) contacts are provided by residues 89–90, 163–164, histidine 174, arginine 191, aspartate 193, and 204–209; these read DG, NE, and TAYALS.

Belongs to the NAD kinase family. A divalent metal cation is required as a cofactor.

It localises to the cytoplasm. It carries out the reaction NAD(+) + ATP = ADP + NADP(+) + H(+). Involved in the regulation of the intracellular balance of NAD and NADP, and is a key enzyme in the biosynthesis of NADP. Catalyzes specifically the phosphorylation on 2'-hydroxyl of the adenosine moiety of NAD to yield NADP. The protein is NAD kinase of Shewanella sp. (strain ANA-3).